A 144-amino-acid polypeptide reads, in one-letter code: MAMSVHCDIVSAEEELFSGLVEMVIAHGHLGDLGILPGHTPLLTDLKPGPVRVIKQGGTEEVFYISGGFLEVQPSMVKVLADTAVRAGDLDEAAAIEARKAAEKALSEKGTEFDYGSAAARLAEAAAQLRTIEEMRKKFGGRSR.

It belongs to the ATPase epsilon chain family. As to quaternary structure, F-type ATPases have 2 components, CF(1) - the catalytic core - and CF(0) - the membrane proton channel. CF(1) has five subunits: alpha(3), beta(3), gamma(1), delta(1), epsilon(1). CF(0) has three main subunits: a, b and c.

It localises to the cell inner membrane. Its function is as follows. Produces ATP from ADP in the presence of a proton gradient across the membrane. The protein is ATP synthase epsilon chain of Ectopseudomonas mendocina (strain ymp) (Pseudomonas mendocina).